A 211-amino-acid polypeptide reads, in one-letter code: NADH-quinone oxidoreductase subunit A (211 aa).

Transmembrane regions (helical) follow at residues 7 to 27, 61 to 81, and 88 to 108; these read WSAL…LVVP, FYLV…LYAY, and VGWI…IGLI.

It belongs to the complex I subunit 3 family. In terms of assembly, NDH-1 is composed of 14 different subunits. Subunits NuoA, H, J, K, L, M, N constitute the membrane sector of the complex.

The protein localises to the cell inner membrane. The enzyme catalyses a quinone + NADH + 5 H(+)(in) = a quinol + NAD(+) + 4 H(+)(out). Its function is as follows. NDH-1 shuttles electrons from NADH, via FMN and iron-sulfur (Fe-S) centers, to quinones in the respiratory chain. The immediate electron acceptor for the enzyme in this species is believed to be ubiquinone. Couples the redox reaction to proton translocation (for every two electrons transferred, four hydrogen ions are translocated across the cytoplasmic membrane), and thus conserves the redox energy in a proton gradient. The chain is NADH-quinone oxidoreductase subunit A from Psychrobacter sp. (strain PRwf-1).